The sequence spans 710 residues: Adenylosuccinate synthetase (710 aa).

The disordered stretch occupies residues 1-54 (MPVRRYGGRYNSSSPGVSNALNPSRTAGWPLSPSPATGSKPASTHHDPVPQEAY). Positions 10 to 25 (YNSSSPGVSNALNPSR) are enriched in polar residues. A compositionally biased stretch (basic and acidic residues) spans 44 to 54 (THHDPVPQEAY). Residues 180–186 (GDEGKGK) and 210–212 (GHT) each bind GTP. Asp181 serves as the catalytic Proton acceptor. Positions 181 and 210 each coordinate Mg(2+). IMP contacts are provided by residues 181–184 (DEGK), 208–211 (NAGH), Thr295, Lys309, Gln421, Thr437, and Lys567. Residue His211 is the Proton donor of the active site. Substrate is bound at residue 563–569 (AVTKKPR). GTP-binding positions include Arg569 and 697 to 699 (GNG).

It belongs to the adenylosuccinate synthetase family. As to quaternary structure, homodimer. Mg(2+) serves as cofactor.

The protein resides in the cytoplasm. The catalysed reaction is IMP + L-aspartate + GTP = N(6)-(1,2-dicarboxyethyl)-AMP + GDP + phosphate + 2 H(+). The protein operates within purine metabolism; AMP biosynthesis via de novo pathway; AMP from IMP: step 1/2. In terms of biological role, plays an important role in the salvage pathway for purine nucleotide biosynthesis. Catalyzes the first committed step in the biosynthesis of AMP from IMP. The chain is Adenylosuccinate synthetase from Leishmania major.